We begin with the raw amino-acid sequence, 138 residues long: Thyrotropin subunit beta (138 aa).

The signal sequence occupies residues 1-20; that stretch reads MTAIYLMSMLFGLACGQAMS. Disulfide bonds link Cys22-Cys72, Cys36-Cys87, Cys39-Cys125, Cys47-Cys103, Cys51-Cys105, and Cys108-Cys115. N-linked (GlcNAc...) asparagine glycosylation is present at Asn43. A propeptide spanning residues 133 to 138 is cleaved from the precursor; that stretch reads VVGFSI.

Belongs to the glycoprotein hormones subunit beta family. As to quaternary structure, heterodimer of a common alpha chain and a unique beta chain which confers biological specificity to thyrotropin, lutropin, follitropin and gonadotropin.

It is found in the secreted. Functionally, indispensable for the control of thyroid structure and metabolism. The sequence is that of Thyrotropin subunit beta (TSHB) from Canis lupus familiaris (Dog).